We begin with the raw amino-acid sequence, 661 residues long: Altered inheritance of mitochondria protein 3-1 (661 aa).

7 disordered regions span residues threonine 19–tyrosine 99, alanine 116–asparagine 142, glutamine 154–serine 194, leucine 263–serine 419, arginine 431–isoleucine 473, tyrosine 487–asparagine 563, and glutamate 615–serine 661. A compositionally biased stretch (basic and acidic residues) spans lysine 37 to threonine 58. Residues proline 120 to asparagine 142 show a composition bias toward low complexity. Over residues leucine 263–glutamine 318 the composition is skewed to low complexity. Polar residues-rich tracts occupy residues asparagine 319–proline 328 and valine 356–leucine 371. Basic and acidic residues predominate over residues threonine 390 to valine 399. Over residues glutamate 406 to serine 419 the composition is skewed to polar residues. The span at proline 434–alanine 447 shows a compositional bias: low complexity. Polar residues-rich tracts occupy residues serine 458–isoleucine 473, arginine 512–aspartate 533, and arginine 541–arginine 552.

Belongs to the AIM3 family.

Its subcellular location is the membrane raft. This chain is Altered inheritance of mitochondria protein 3-1 (AIM3-1), found in Candida glabrata (strain ATCC 2001 / BCRC 20586 / JCM 3761 / NBRC 0622 / NRRL Y-65 / CBS 138) (Yeast).